The following is a 129-amino-acid chain: Glycine cleavage system H protein (129 aa).

The 83-residue stretch at Leu-24 to Lys-106 folds into the Lipoyl-binding domain. Residue Lys-65 is modified to N6-lipoyllysine.

The protein belongs to the GcvH family. As to quaternary structure, the glycine cleavage system is composed of four proteins: P, T, L and H. (R)-lipoate serves as cofactor.

The glycine cleavage system catalyzes the degradation of glycine. The H protein shuttles the methylamine group of glycine from the P protein to the T protein. This is Glycine cleavage system H protein from Prochlorococcus marinus (strain MIT 9515).